Here is a 235-residue protein sequence, read N- to C-terminus: Glucosamine-6-phosphate deaminase (235 aa).

Asp-62 functions as the Proton acceptor; for enolization step in the catalytic mechanism. Asn-128 functions as the For ring-opening step in the catalytic mechanism. The Proton acceptor; for ring-opening step role is filled by His-130. The active-site For ring-opening step is the Glu-135.

Belongs to the glucosamine/galactosamine-6-phosphate isomerase family. NagB subfamily.

The catalysed reaction is alpha-D-glucosamine 6-phosphate + H2O = beta-D-fructose 6-phosphate + NH4(+). It participates in amino-sugar metabolism; N-acetylneuraminate degradation; D-fructose 6-phosphate from N-acetylneuraminate: step 5/5. Catalyzes the reversible isomerization-deamination of glucosamine 6-phosphate (GlcN6P) to form fructose 6-phosphate (Fru6P) and ammonium ion. The polypeptide is Glucosamine-6-phosphate deaminase (Streptococcus gordonii (strain Challis / ATCC 35105 / BCRC 15272 / CH1 / DL1 / V288)).